A 950-amino-acid polypeptide reads, in one-letter code: ABC transporter A family member 9 (950 aa).

A run of 6 helical transmembrane segments spans residues 31 to 51 (ATCL…SIEE), 223 to 243 (IISA…MFGF), 276 to 296 (WLIW…LFGM), 308 to 328 (FVLV…LAFA), 342 to 362 (VGFL…AGFP), and 426 to 446 (IWLV…DNII). The 246-residue stretch at 520–765 (VQIHGLAKTY…FGTGFVATVS (246 aa)) folds into the ABC transporter domain. 566 to 573 (GPNGAGKT) serves as a coordination point for ATP.

Belongs to the ABC transporter superfamily. ABCA family. CPR flippase (TC 3.A.1.211) subfamily. Highly expressed in siliques. Detected in seedlings, rosette leaves, stems and flowers.

It is found in the endoplasmic reticulum membrane. Mediates the transport of acyl-CoAs and/or free fatty acids to the endoplasmic reticulum. Has no effect on the selectivity of fatty acid incorporation into triacylglycerol or further desaturation steps. The protein is ABC transporter A family member 9 (ABCA9) of Arabidopsis thaliana (Mouse-ear cress).